A 170-amino-acid polypeptide reads, in one-letter code: Lipoprotein signal peptidase (170 aa).

Transmembrane regions (helical) follow at residues 12–32, 67–87, and 93–113; these read WYWVVVLVFVADQLSKQWVLA, WQRWLFTLVAVGFSTLLTVWL, and GLWRLNLAYTLVIGGALGNLI. Catalysis depends on residues Asp-123 and Asp-141. Residues 133–153 traverse the membrane as a helical segment; the sequence is HFPAFNIADSAICVGAGLIIL.

The protein belongs to the peptidase A8 family.

It is found in the cell inner membrane. It catalyses the reaction Release of signal peptides from bacterial membrane prolipoproteins. Hydrolyzes -Xaa-Yaa-Zaa-|-(S,diacylglyceryl)Cys-, in which Xaa is hydrophobic (preferably Leu), and Yaa (Ala or Ser) and Zaa (Gly or Ala) have small, neutral side chains.. Its pathway is protein modification; lipoprotein biosynthesis (signal peptide cleavage). In terms of biological role, this protein specifically catalyzes the removal of signal peptides from prolipoproteins. This Shewanella loihica (strain ATCC BAA-1088 / PV-4) protein is Lipoprotein signal peptidase.